A 188-amino-acid chain; its full sequence is Elongation factor P (188 aa).

The protein belongs to the elongation factor P family.

The protein resides in the cytoplasm. The protein operates within protein biosynthesis; polypeptide chain elongation. Functionally, involved in peptide bond synthesis. Stimulates efficient translation and peptide-bond synthesis on native or reconstituted 70S ribosomes in vitro. Probably functions indirectly by altering the affinity of the ribosome for aminoacyl-tRNA, thus increasing their reactivity as acceptors for peptidyl transferase. In Nitrosospira multiformis (strain ATCC 25196 / NCIMB 11849 / C 71), this protein is Elongation factor P.